The primary structure comprises 595 residues: Potassium-transporting ATPase potassium-binding subunit (595 aa).

A run of 10 helical transmembrane segments spans residues isoleucine 9–alanine 29, threonine 63–leucine 83, glycine 135–isoleucine 155, isoleucine 177–valine 197, phenylalanine 285–methionine 305, glycine 312–leucine 332, glycine 412–glycine 432, alanine 451–leucine 471, leucine 516–isoleucine 536, and phenylalanine 560–leucine 580.

It belongs to the KdpA family. The system is composed of three essential subunits: KdpA, KdpB and KdpC.

The protein localises to the cell inner membrane. Part of the high-affinity ATP-driven potassium transport (or Kdp) system, which catalyzes the hydrolysis of ATP coupled with the electrogenic transport of potassium into the cytoplasm. This subunit binds the periplasmic potassium ions and delivers the ions to the membrane domain of KdpB through an intramembrane tunnel. The polypeptide is Potassium-transporting ATPase potassium-binding subunit (Methylococcus capsulatus (strain ATCC 33009 / NCIMB 11132 / Bath)).